Here is a 157-residue protein sequence, read N- to C-terminus: S-ribosylhomocysteine lyase (157 aa).

3 residues coordinate Fe cation: His54, His58, and Cys126.

The protein belongs to the LuxS family. In terms of assembly, homodimer. Requires Fe cation as cofactor.

The catalysed reaction is S-(5-deoxy-D-ribos-5-yl)-L-homocysteine = (S)-4,5-dihydroxypentane-2,3-dione + L-homocysteine. Its function is as follows. Involved in the synthesis of autoinducer 2 (AI-2) which is secreted by bacteria and is used to communicate both the cell density and the metabolic potential of the environment. The regulation of gene expression in response to changes in cell density is called quorum sensing. Catalyzes the transformation of S-ribosylhomocysteine (RHC) to homocysteine (HC) and 4,5-dihydroxy-2,3-pentadione (DPD). The protein is S-ribosylhomocysteine lyase of Bacillus velezensis (strain DSM 23117 / BGSC 10A6 / LMG 26770 / FZB42) (Bacillus amyloliquefaciens subsp. plantarum).